The primary structure comprises 155 residues: Large ribosomal subunit protein uL22c (155 aa).

It belongs to the universal ribosomal protein uL22 family. In terms of assembly, part of the 50S ribosomal subunit.

It localises to the plastid. It is found in the chloroplast. Its function is as follows. This protein binds specifically to 23S rRNA. In terms of biological role, the globular domain of the protein is located near the polypeptide exit tunnel on the outside of the subunit, while an extended beta-hairpin is found that lines the wall of the exit tunnel in the center of the 70S ribosome. The protein is Large ribosomal subunit protein uL22c (rpl22) of Nicotiana tomentosiformis (Tobacco).